We begin with the raw amino-acid sequence, 713 residues long: MDAPIKFFATAPKGVEPLLADELRALGALEVSETRAGASFQGSLETAYRICLWSRLASRVLMPIAEFSAEDPDQLYAAVGAVPWEEHMTAAGTLAVDAQLRRSKINHSRFAALRVKDAVVDRFRERFDQRPSIDLERPDIRLNLHIDRDQATLSLDLSGDSLHRRGYRAEGVLAPLKENLAAAILLRAGWPDVGARGGALVDPMCGSGTLVIEAALITADCAPGLTRPYWGFAGWLQHRAEVWDTLLEEARQRREAGLQQLPCMIGYDRDRKAIRAARENARLAGLDAHLRFERCELEDLQAVPDAGESGGLLVTNPPYGERLGEVDELRSLYASLGEKLRTHFSGWQAAVFTGNPELAKHIGIRAHKLYKLYNGALECRLLNFDIAEQRFFGADAPQAPLSEGAIMFANRLRKNIKQLRRWLKKEDVTCYRLYDADMPEYAVAVDIYEDRVHVQEYQAPASVDSRQAERRLREVMRVLPEVLQVEPEAITLKVRRKQKGSSQYQKLDRSGERFEVREGNCWFLVNLTDYLDTGLFLDHRPTRFMLQAMAEGKSFLNLFAYTGTATVHAVKGGAATTVTVDMSRTYLDWAQANLRLNQLSGPQHRFVCADVLQYLEREQAHYDLIFLDPPTFSTSKSMETTLDIQRDHVDIIRLAANLLTPGGVLIFSNNFRKFRMDFESLPELEIENITAATIPHDFARNPKIHNCWRITRR.

One can recognise a THUMP domain in the interval 46–157 (TAYRICLWSR…RDQATLSLDL (112 aa)).

Belongs to the methyltransferase superfamily. RlmKL family.

Its subcellular location is the cytoplasm. It catalyses the reaction guanosine(2445) in 23S rRNA + S-adenosyl-L-methionine = N(2)-methylguanosine(2445) in 23S rRNA + S-adenosyl-L-homocysteine + H(+). The catalysed reaction is guanosine(2069) in 23S rRNA + S-adenosyl-L-methionine = N(2)-methylguanosine(2069) in 23S rRNA + S-adenosyl-L-homocysteine + H(+). In terms of biological role, specifically methylates the guanine in position 2445 (m2G2445) and the guanine in position 2069 (m7G2069) of 23S rRNA. This Syntrophotalea carbinolica (strain DSM 2380 / NBRC 103641 / GraBd1) (Pelobacter carbinolicus) protein is Ribosomal RNA large subunit methyltransferase K/L.